An 81-amino-acid chain; its full sequence is uncharacterized protein (81 aa).

It to Synechocystis PCC 6803 ssr2439.

Functionally, may have a regulatory function. This is an uncharacterized protein from Synechococcus elongatus (strain ATCC 33912 / PCC 7942 / FACHB-805) (Anacystis nidulans R2).